The following is a 229-amino-acid chain: Enolase-phosphatase E1 (229 aa).

It belongs to the HAD-like hydrolase superfamily. MasA/MtnC family. Monomer. Mg(2+) serves as cofactor.

It carries out the reaction 5-methylsulfanyl-2,3-dioxopentyl phosphate + H2O = 1,2-dihydroxy-5-(methylsulfanyl)pent-1-en-3-one + phosphate. It functions in the pathway amino-acid biosynthesis; L-methionine biosynthesis via salvage pathway; L-methionine from S-methyl-5-thio-alpha-D-ribose 1-phosphate: step 3/6. The protein operates within amino-acid biosynthesis; L-methionine biosynthesis via salvage pathway; L-methionine from S-methyl-5-thio-alpha-D-ribose 1-phosphate: step 4/6. Its function is as follows. Bifunctional enzyme that catalyzes the enolization of 2,3-diketo-5-methylthiopentyl-1-phosphate (DK-MTP-1-P) into the intermediate 2-hydroxy-3-keto-5-methylthiopentenyl-1-phosphate (HK-MTPenyl-1-P), which is then dephosphorylated to form the acireductone 1,2-dihydroxy-3-keto-5-methylthiopentene (DHK-MTPene). This Yersinia pseudotuberculosis serotype O:1b (strain IP 31758) protein is Enolase-phosphatase E1.